A 192-amino-acid polypeptide reads, in one-letter code: Interleukin-18 (192 aa).

The propeptide occupies 1 to 35 (MAAEPVEDNCISFVEMKFINNTLYFVAENGDLESD).

The protein belongs to the IL-1 family. As to quaternary structure, forms a ternary complex with ligand-binding receptor subunit IL18R1 and signaling receptor subunit IL18RAP at the plasma membrane. Mature IL18 first binds to IL18R1 forming a low affinity binary complex, which then interacts with IL18RAP to form a high affinity ternary complex that signals inside the cell. Interacts with cargo receptor TMED10; the interaction mediates the translocation from the cytoplasm into the ERGIC (endoplasmic reticulum-Golgi intermediate compartment) and thereby secretion. Post-translationally, the pro-IL-18 precursor is processed by CASP1, CASP4 or CASP5 to yield its mature, active form. The pro-IL-18 precursor features autoinhibitory interactions between the propeptide and the post-cleavage-site region, preventing recognition by the IL18R1 receptor. Processing by CASP1, CASP4 or CASP5 induces conformational changes to generate critical receptor-binding sites. The mature form is then secreted and released in the extracellular milieu by passing through the gasdermin-D (GSDMD) pore. In contrast, cleavage by CASP3 inactivates IL18.

It is found in the cytoplasm. Its subcellular location is the cytosol. The protein resides in the secreted. In terms of biological role, pro-inflammatory cytokine primarily involved in epithelial barrier repair, polarized T-helper 1 (Th1) cell and natural killer (NK) cell immune responses. Upon binding to IL18R1 and IL18RAP, forms a signaling ternary complex which activates NF-kappa-B, triggering synthesis of inflammatory mediators. Synergizes with IL12/interleukin-12 to induce IFNG synthesis from T-helper 1 (Th1) cells and natural killer (NK) cells. Involved in transduction of inflammation downstream of pyroptosis: its mature form is specifically released in the extracellular milieu by passing through the gasdermin-D (GSDMD) pore. This is Interleukin-18 (IL18) from Capra hircus (Goat).